The sequence spans 398 residues: MELIKGNIASPKGFYADGKHAGLKRKRNDIGWIYSEVPANAAAVYTMNQMQAAPIFVTKDSFQSNAKLQAIIVNSGNANACTGNQGMLDALAMRAQTAEKLEIPLDSVAVASTGIIGDMLPMDKINAGIEMLEKQTGNAADFEEAILTTDTFQKQISFQTEIGGRKVTMSGVAKGSGMIHPNMATMLAFITTDAAIPAELLQKLLKIKVDKTFNQITVDGDTSTNDMVVVMANGCAENPMLQEGTADFAKFADMFQAVTEHLAKSIARDGEGATKLIEVQVNGATKTEDARMIAKKIVSSSLVKTAAFGGDGNWGRIICAIGYSGGRFAPDNITIKIGGIEILNHSSQTIYNQQALDAYLEEEHIIIEVDLHIGLESGTAWGCDLSYEYVKINACYRT.

T148, K174, T185, E271, N393, and T398 together coordinate substrate. The active-site Nucleophile is the T185.

This sequence belongs to the ArgJ family. As to quaternary structure, heterotetramer of two alpha and two beta chains.

It is found in the cytoplasm. The enzyme catalyses N(2)-acetyl-L-ornithine + L-glutamate = N-acetyl-L-glutamate + L-ornithine. It catalyses the reaction L-glutamate + acetyl-CoA = N-acetyl-L-glutamate + CoA + H(+). Its pathway is amino-acid biosynthesis; L-arginine biosynthesis; L-ornithine and N-acetyl-L-glutamate from L-glutamate and N(2)-acetyl-L-ornithine (cyclic): step 1/1. The protein operates within amino-acid biosynthesis; L-arginine biosynthesis; N(2)-acetyl-L-ornithine from L-glutamate: step 1/4. In terms of biological role, catalyzes two activities which are involved in the cyclic version of arginine biosynthesis: the synthesis of N-acetylglutamate from glutamate and acetyl-CoA as the acetyl donor, and of ornithine by transacetylation between N(2)-acetylornithine and glutamate. The sequence is that of Arginine biosynthesis bifunctional protein ArgJ from Listeria monocytogenes serovar 1/2a (strain ATCC BAA-679 / EGD-e).